A 224-amino-acid polypeptide reads, in one-letter code: Adenylate kinase (224 aa).

10–15 is a binding site for ATP; sequence GSGKST. The segment at 30-59 is NMP; it reads SSGDLIRREIERKSSLGREMEAYLSRGDLI. AMP is bound by residues serine 31, arginine 36, 57 to 59, 83 to 86, and glutamine 90; these read DLI and GYPR. Residues 124–161 are LID; it reads GRRICPNCGAVYHVKYNPPKVPGICDVCGSELIQRADD. Residue arginine 125 participates in ATP binding. Positions 128 and 131 each coordinate Zn(2+). Residue 134–135 coordinates ATP; that stretch reads VY. Residues cysteine 148 and cysteine 151 each coordinate Zn(2+). The AMP site is built by arginine 158 and arginine 169. Residue glycine 197 coordinates ATP.

The protein belongs to the adenylate kinase family. In terms of assembly, monomer.

The protein localises to the cytoplasm. It catalyses the reaction AMP + ATP = 2 ADP. Its pathway is purine metabolism; AMP biosynthesis via salvage pathway; AMP from ADP: step 1/1. Functionally, catalyzes the reversible transfer of the terminal phosphate group between ATP and AMP. Plays an important role in cellular energy homeostasis and in adenine nucleotide metabolism. This chain is Adenylate kinase, found in Thermococcus kodakarensis (strain ATCC BAA-918 / JCM 12380 / KOD1) (Pyrococcus kodakaraensis (strain KOD1)).